We begin with the raw amino-acid sequence, 128 residues long: Fluoride-specific ion channel FluC (128 aa).

A run of 4 helical transmembrane segments spans residues 10 to 30 (FLAVAIGAALGACARWLAGLW), 40 to 60 (TLLVNLAGGYLIGLALAVLLA), 71 to 91 (AAVTGFLGGLTTFSTFSAETV), and 102 to 122 (ALGYAALSLVGSLALTALGLA). The Na(+) site is built by Gly78 and Thr81.

The protein belongs to the fluoride channel Fluc/FEX (TC 1.A.43) family.

It is found in the cell inner membrane. The enzyme catalyses fluoride(in) = fluoride(out). With respect to regulation, na(+) is not transported, but it plays an essential structural role and its presence is essential for fluoride channel function. Fluoride-specific ion channel. Important for reducing fluoride concentration in the cell, thus reducing its toxicity. This is Fluoride-specific ion channel FluC from Bordetella petrii (strain ATCC BAA-461 / DSM 12804 / CCUG 43448).